The chain runs to 339 residues: Vomeronasal type-1 receptor A14 (339 aa).

The Extracellular segment spans residues Met1 to Thr42. A helical membrane pass occupies residues Phe43 to Phe63. Over Lys64–Asp75 the chain is Cytoplasmic. Residues Leu76–Ala96 traverse the membrane as a helical segment. The Extracellular segment spans residues Thr97–Arg119. The cysteines at positions 111 and 198 are disulfide-linked. Residues Thr120–Leu140 traverse the membrane as a helical segment. At Ser141–Cys160 the chain is on the cytoplasmic side. A helical transmembrane segment spans residues Ala161–Ile181. Topologically, residues Ala182–Thr213 are extracellular. Asn185 carries an N-linked (GlcNAc...) asparagine glycan. Residues Leu214 to Val234 traverse the membrane as a helical segment. The Cytoplasmic portion of the chain corresponds to Ala235 to Arg264. A helical transmembrane segment spans residues Ser265–Ser285. Residues Ser286 to Ser296 lie on the Extracellular side of the membrane. The chain crosses the membrane as a helical span at residues Tyr297–Val317. At Thr318–His339 the chain is on the cytoplasmic side.

The protein belongs to the G-protein coupled receptor 1 family.

It is found in the cell membrane. Its function is as follows. Putative pheromone receptor implicated in the regulation of social as well as reproductive behavior. This Rattus norvegicus (Rat) protein is Vomeronasal type-1 receptor A14.